Here is a 613-residue protein sequence, read N- to C-terminus: Alkyldihydroxyacetonephosphate synthase (613 aa).

The region spanning 126-307 (IDRPPDAVIL…TEAVVKIERL (182 aa)) is the FAD-binding PCMH-type domain. Residues 158 to 164 (PFGGGTN), 228 to 234 (DSYAYST), 241 to 244 (ARGS), and 291 to 297 (EGAFGLV) each bind FAD. R437 lines the substrate pocket. Residue Y498 is the Proton donor/acceptor of the active site. Residues 534-536 (HHH) are important for enzyme activity. The disordered stretch occupies residues 572–593 (NPGKLLPSPPSEKETPKATQAR). Residues 611 to 613 (AHL) carry the Microbody targeting signal motif.

Belongs to the FAD-binding oxidoreductase/transferase type 4 family. As to quaternary structure, homodimer. It depends on FAD as a cofactor.

The protein localises to the peroxisome. The catalysed reaction is a long chain fatty alcohol + a 1-acylglycerone 3-phosphate = a 1-O-alkylglycerone 3-phosphate + a long-chain fatty acid + H(+). It participates in glycerolipid metabolism; ether lipid biosynthesis. In terms of biological role, catalyzes the exchange of an acyl for a long-chain alkyl group and the formation of the ether bond in the biosynthesis of ether phospholipids. The polypeptide is Alkyldihydroxyacetonephosphate synthase (Trypanosoma brucei brucei).